A 360-amino-acid chain; its full sequence is Peptide chain release factor 1 (360 aa).

At Gln-235 the chain carries N5-methylglutamine. Basic and acidic residues predominate over residues 285–295 (RQAAEQADTRR). Residues 285 to 309 (RQAAEQADTRRNLLGSGDRSDKIRT) form a disordered region.

Belongs to the prokaryotic/mitochondrial release factor family. Post-translationally, methylated by PrmC. Methylation increases the termination efficiency of RF1.

Its subcellular location is the cytoplasm. Its function is as follows. Peptide chain release factor 1 directs the termination of translation in response to the peptide chain termination codons UAG and UAA. This Actinobacillus pleuropneumoniae serotype 7 (strain AP76) protein is Peptide chain release factor 1.